The following is a 289-amino-acid chain: Nucleotide-binding protein Franean1_2060 (289 aa).

An ATP-binding site is contributed by 13–20; it reads GLSGAGRS. 64 to 67 contacts GTP; it reads DVRG.

It belongs to the RapZ-like family.

Displays ATPase and GTPase activities. The sequence is that of Nucleotide-binding protein Franean1_2060 from Parafrankia sp. (strain EAN1pec).